Reading from the N-terminus, the 74-residue chain is MKLLGGLLLLFTATCLCNVDCDIYKKYPVVAIPCPIENIPVCGSDYITYGNKCKLCTEILRSNGKIQFLHEGHC.

A signal peptide spans 1 to 17; sequence MKLLGGLLLLFTATCLC. In terms of domain architecture, Kazal-like spans 18–74; it reads NVDCDIYKKYPVVAIPCPIENIPVCGSDYITYGNKCKLCTEILRSNGKIQFLHEGHC. Intrachain disulfides connect cysteine 21-cysteine 56, cysteine 34-cysteine 53, and cysteine 42-cysteine 74.

The protein localises to the secreted. Its function is as follows. Probable serine protease inhibitor. The sequence is that of Serine protease inhibitor Kazal-type 7 (Spink7) from Rattus norvegicus (Rat).